The following is a 124-amino-acid chain: Small ribosomal subunit protein uS12 (124 aa).

A disordered region spans residues 8 to 28 (IRSAREKTDKKTKSPALKSCP). A compositionally biased stretch (basic and acidic residues) spans 10–19 (SAREKTDKKT). 3-methylthioaspartic acid is present on Asp-89.

It belongs to the universal ribosomal protein uS12 family. In terms of assembly, part of the 30S ribosomal subunit. Contacts proteins S8 and S17. May interact with IF1 in the 30S initiation complex.

Functionally, with S4 and S5 plays an important role in translational accuracy. Its function is as follows. Interacts with and stabilizes bases of the 16S rRNA that are involved in tRNA selection in the A site and with the mRNA backbone. Located at the interface of the 30S and 50S subunits, it traverses the body of the 30S subunit contacting proteins on the other side and probably holding the rRNA structure together. The combined cluster of proteins S8, S12 and S17 appears to hold together the shoulder and platform of the 30S subunit. The protein is Small ribosomal subunit protein uS12 of Arthrospira platensis (Spirulina platensis).